We begin with the raw amino-acid sequence, 412 residues long: Propionate kinase (412 aa).

This sequence belongs to the acetokinase family. PduW subfamily.

The protein resides in the cytoplasm. It catalyses the reaction propanoate + ATP = propanoyl phosphate + ADP. Its pathway is polyol metabolism; 1,2-propanediol degradation. In terms of biological role, works with phosphate acetyltransferase (pta) to capture exogenous propionate and regenerate propionyl-CoA during degradation of 1,2-propanediol (1,2-PD). The polypeptide is Propionate kinase (Yersinia enterocolitica serotype O:8 / biotype 1B (strain NCTC 13174 / 8081)).